Reading from the N-terminus, the 435-residue chain is Methylenetetrahydrofolate--tRNA-(uracil-5-)-methyltransferase TrmFO (435 aa).

9–14 (GAGLAG) provides a ligand contact to FAD.

This sequence belongs to the MnmG family. TrmFO subfamily. FAD is required as a cofactor.

Its subcellular location is the cytoplasm. It catalyses the reaction uridine(54) in tRNA + (6R)-5,10-methylene-5,6,7,8-tetrahydrofolate + NADH + H(+) = 5-methyluridine(54) in tRNA + (6S)-5,6,7,8-tetrahydrofolate + NAD(+). The enzyme catalyses uridine(54) in tRNA + (6R)-5,10-methylene-5,6,7,8-tetrahydrofolate + NADPH + H(+) = 5-methyluridine(54) in tRNA + (6S)-5,6,7,8-tetrahydrofolate + NADP(+). In terms of biological role, catalyzes the folate-dependent formation of 5-methyl-uridine at position 54 (M-5-U54) in all tRNAs. This is Methylenetetrahydrofolate--tRNA-(uracil-5-)-methyltransferase TrmFO from Staphylococcus aureus (strain Newman).